The sequence spans 478 residues: ATP synthase subunit beta (478 aa).

An ATP-binding site is contributed by glycine 164–threonine 171.

It belongs to the ATPase alpha/beta chains family. In terms of assembly, F-type ATPases have 2 components, CF(1) - the catalytic core - and CF(0) - the membrane proton channel. CF(1) has five subunits: alpha(3), beta(3), gamma(1), delta(1), epsilon(1). CF(0) has three main subunits: a(1), b(2) and c(9-12). The alpha and beta chains form an alternating ring which encloses part of the gamma chain. CF(1) is attached to CF(0) by a central stalk formed by the gamma and epsilon chains, while a peripheral stalk is formed by the delta and b chains.

Its subcellular location is the cell membrane. The enzyme catalyses ATP + H2O + 4 H(+)(in) = ADP + phosphate + 5 H(+)(out). In terms of biological role, produces ATP from ADP in the presence of a proton gradient across the membrane. The catalytic sites are hosted primarily by the beta subunits. The protein is ATP synthase subunit beta of Streptomyces coelicolor (strain ATCC BAA-471 / A3(2) / M145).